The following is a 156-amino-acid chain: 17 kDa lipoprotein (156 aa).

The signal sequence occupies residues 1–21 (MKGSVRALCAFLGVGALGSAL). C22 is lipidated: N-palmitoyl cysteine. C22 carries the S-diacylglycerol cysteine lipid modification.

The protein localises to the cell membrane. This chain is 17 kDa lipoprotein (tpp17), found in Treponema pallidum (strain Nichols).